A 341-amino-acid chain; its full sequence is N-acetyl-gamma-glutamyl-phosphate reductase (341 aa).

Cysteine 145 is an active-site residue.

Belongs to the NAGSA dehydrogenase family. Type 1 subfamily.

It is found in the cytoplasm. It carries out the reaction N-acetyl-L-glutamate 5-semialdehyde + phosphate + NADP(+) = N-acetyl-L-glutamyl 5-phosphate + NADPH + H(+). It functions in the pathway amino-acid biosynthesis; L-arginine biosynthesis; N(2)-acetyl-L-ornithine from L-glutamate: step 3/4. Its function is as follows. Catalyzes the NADPH-dependent reduction of N-acetyl-5-glutamyl phosphate to yield N-acetyl-L-glutamate 5-semialdehyde. This Methanothrix thermoacetophila (strain DSM 6194 / JCM 14653 / NBRC 101360 / PT) (Methanosaeta thermophila) protein is N-acetyl-gamma-glutamyl-phosphate reductase.